Consider the following 388-residue polypeptide: LL-diaminopimelate aminotransferase (388 aa).

Substrate is bound by residues tyrosine 13, glycine 38, lysine 102, tyrosine 126, and asparagine 176. Pyridoxal 5'-phosphate contacts are provided by residues 101 to 102 (SK), tyrosine 126, asparagine 176, tyrosine 207, and 235 to 237 (SLS). At lysine 238 the chain carries N6-(pyridoxal phosphate)lysine. Arginine 246 is a binding site for pyridoxal 5'-phosphate. Residue arginine 364 participates in substrate binding.

The protein belongs to the class-I pyridoxal-phosphate-dependent aminotransferase family. LL-diaminopimelate aminotransferase subfamily. As to quaternary structure, homodimer. The cofactor is pyridoxal 5'-phosphate.

It carries out the reaction (2S,6S)-2,6-diaminopimelate + 2-oxoglutarate = (S)-2,3,4,5-tetrahydrodipicolinate + L-glutamate + H2O + H(+). Its pathway is amino-acid biosynthesis; L-lysine biosynthesis via DAP pathway; LL-2,6-diaminopimelate from (S)-tetrahydrodipicolinate (aminotransferase route): step 1/1. Involved in the synthesis of meso-diaminopimelate (m-DAP or DL-DAP), required for both lysine and peptidoglycan biosynthesis. Catalyzes the direct conversion of tetrahydrodipicolinate to LL-diaminopimelate. This is LL-diaminopimelate aminotransferase from Dehalococcoides mccartyi (strain CBDB1).